The sequence spans 304 residues: Lipoyl synthase (304 aa).

Residues cysteine 41, cysteine 46, cysteine 52, cysteine 68, cysteine 72, cysteine 75, and serine 281 each coordinate [4Fe-4S] cluster. One can recognise a Radical SAM core domain in the interval 54–270; it reads GARRTATFMI…RKIAMEKGFK (217 aa). The segment at 282 to 304 is disordered; the sequence is YHADEQVNEAAKEKQRQGEEQLN.

The protein belongs to the radical SAM superfamily. Lipoyl synthase family. The cofactor is [4Fe-4S] cluster.

It is found in the cytoplasm. It carries out the reaction [[Fe-S] cluster scaffold protein carrying a second [4Fe-4S](2+) cluster] + N(6)-octanoyl-L-lysyl-[protein] + 2 oxidized [2Fe-2S]-[ferredoxin] + 2 S-adenosyl-L-methionine + 4 H(+) = [[Fe-S] cluster scaffold protein] + N(6)-[(R)-dihydrolipoyl]-L-lysyl-[protein] + 4 Fe(3+) + 2 hydrogen sulfide + 2 5'-deoxyadenosine + 2 L-methionine + 2 reduced [2Fe-2S]-[ferredoxin]. It participates in protein modification; protein lipoylation via endogenous pathway; protein N(6)-(lipoyl)lysine from octanoyl-[acyl-carrier-protein]. In terms of biological role, catalyzes the radical-mediated insertion of two sulfur atoms into the C-6 and C-8 positions of the octanoyl moiety bound to the lipoyl domains of lipoate-dependent enzymes, thereby converting the octanoylated domains into lipoylated derivatives. This is Lipoyl synthase from Staphylococcus epidermidis (strain ATCC 35984 / DSM 28319 / BCRC 17069 / CCUG 31568 / BM 3577 / RP62A).